We begin with the raw amino-acid sequence, 725 residues long: MTIENGIAKAIYVDGTKFVLNGRHVSYCFHVDDETGDLRTDHFGGRVTGAIPVDPSPVVDGWTGMPDRVRREFPDQGRGDFRIPALRIRQAEGHTVSALKYQSYTLLHGKPDLPGLPATFGTEKDVSTLVVHLRDEYSSVTADLIYSVFPEYNAIVRSVSITNNGFQPISIEALASFSTDLPYEDLEMISLRGDWAREAHRMRRKVEYGTQGFGSTTGFSSHLHNPFLALAHPSTTESQGEAWGFSLVYTGSFEVNVEKGSQGLTRAVLGFHPNQLSWPLSPGETLTSPECVAVYSNHGLGGMSRSLHRLFRDHLIKSKFATANRPVLLNSWEGLYFDIDETSMIRIAKESAALGVKLLVMDDGWFGKDYPRTSDAAGLGDWVPNPARFPNGLAPMVDQITSLKVANSSANLLFGIWVEPEMVNPDSALYREHPEWALHAGSYPRTEQRNQLVLNLALLEVQEFIINFMTDLLSSAKISYVKWDLNRGINETSAPKATHAYMLGMYKVFDTLTSRFPDVLWEGCAAGGGRFDPGILQYFPQIWTSDDSDAVERIFIQMGSSLAYPASAMGAHISAVPNHQTGRTTPLSLRAHVAMMGGSFGLELDPSQVSAEEKALIPELIALAEKVNPIVLTGDMWRLSLPEESNWPAVQFISQDQSQVVLFYFQLSPNVNHSMPRVRLQGLDEDAMYRVDGAGPYSGAMLMNLGLQYSFRTEYGSRVVFLEKQ.

A glycan (N-linked (GlcNAc...) asparagine) is linked at Asn-407. The Nucleophile role is filled by Asp-484. A glycan (N-linked (GlcNAc...) asparagine) is linked at Asn-490. Asp-546 acts as the Proton donor in catalysis. N-linked (GlcNAc...) asparagine glycosylation occurs at Asn-672.

Belongs to the glycosyl hydrolase 36 family. Homotetramer. Requires Mg(2+) as cofactor. It depends on NAD(+) as a cofactor.

The protein localises to the secreted. The enzyme catalyses Hydrolysis of terminal, non-reducing alpha-D-galactose residues in alpha-D-galactosides, including galactose oligosaccharides, galactomannans and galactolipids.. Its function is as follows. Hydrolyzes a variety of simple alpha-D-galactoside as well as more complex molecules such as oligosaccharides and polysaccharides. This Aspergillus terreus (strain NIH 2624 / FGSC A1156) protein is Probable alpha-galactosidase G (aglG).